The primary structure comprises 763 residues: Protein translocase subunit SecA 2 (763 aa).

ATP contacts are provided by residues Gln83, 101–105 (GEGKT), and Asp490.

It belongs to the SecA family. Monomer and homodimer. Part of the essential Sec protein translocation apparatus which comprises SecA, SecYEG and auxiliary proteins SecDF. Other proteins may also be involved.

It is found in the cell membrane. It localises to the cytoplasm. The catalysed reaction is ATP + H2O + cellular proteinSide 1 = ADP + phosphate + cellular proteinSide 2.. Its function is as follows. Part of the Sec protein translocase complex. Interacts with the SecYEG preprotein conducting channel. Has a central role in coupling the hydrolysis of ATP to the transfer of proteins into and across the cell membrane, serving as an ATP-driven molecular motor driving the stepwise translocation of polypeptide chains across the membrane. In Corynebacterium glutamicum (strain R), this protein is Protein translocase subunit SecA 2.